We begin with the raw amino-acid sequence, 415 residues long: 3-isopropylmalate dehydratase large subunit (415 aa).

The [4Fe-4S] cluster site is built by cysteine 297, cysteine 355, and cysteine 358.

It belongs to the aconitase/IPM isomerase family. LeuC type 2 subfamily. In terms of assembly, heterodimer of LeuC and LeuD. [4Fe-4S] cluster is required as a cofactor.

It catalyses the reaction (2R,3S)-3-isopropylmalate = (2S)-2-isopropylmalate. It participates in amino-acid biosynthesis; L-leucine biosynthesis; L-leucine from 3-methyl-2-oxobutanoate: step 2/4. Functionally, catalyzes the isomerization between 2-isopropylmalate and 3-isopropylmalate, via the formation of 2-isopropylmaleate. This is 3-isopropylmalate dehydratase large subunit from Sulfurisphaera tokodaii (strain DSM 16993 / JCM 10545 / NBRC 100140 / 7) (Sulfolobus tokodaii).